The primary structure comprises 94 residues: Integration host factor subunit beta (94 aa).

It belongs to the bacterial histone-like protein family. In terms of assembly, heterodimer of an alpha and a beta chain.

Functionally, this protein is one of the two subunits of integration host factor, a specific DNA-binding protein that functions in genetic recombination as well as in transcriptional and translational control. The chain is Integration host factor subunit beta (ihfB) from Serratia marcescens.